A 602-amino-acid chain; its full sequence is Elongation factor 4 (602 aa).

A tr-type G domain is found at Glu7 to Lys188. Residues Asp19–Thr24 and Asn135–Asp138 each bind GTP.

This sequence belongs to the TRAFAC class translation factor GTPase superfamily. Classic translation factor GTPase family. LepA subfamily.

Its subcellular location is the cell inner membrane. It carries out the reaction GTP + H2O = GDP + phosphate + H(+). Required for accurate and efficient protein synthesis under certain stress conditions. May act as a fidelity factor of the translation reaction, by catalyzing a one-codon backward translocation of tRNAs on improperly translocated ribosomes. Back-translocation proceeds from a post-translocation (POST) complex to a pre-translocation (PRE) complex, thus giving elongation factor G a second chance to translocate the tRNAs correctly. Binds to ribosomes in a GTP-dependent manner. This chain is Elongation factor 4, found in Chlamydia trachomatis serovar A (strain ATCC VR-571B / DSM 19440 / HAR-13).